We begin with the raw amino-acid sequence, 335 residues long: Cytochrome c biogenesis protein CcsA (335 aa).

Transmembrane regions (helical) follow at residues 15–35, 36–56, 68–88, 97–117, 142–162, 243–263, 278–298, and 304–324; these read FLLL…PNVT, WLPT…ATLL, LSNL…IHLV, LVGV…ALSL, VMML…AFLV, IIGL…VWAN, WALI…TKGW, and AILA…VNLL.

This sequence belongs to the CcmF/CycK/Ccl1/NrfE/CcsA family. May interact with ccs1.

The protein localises to the cellular thylakoid membrane. Functionally, required during biogenesis of c-type cytochromes (cytochrome c6 and cytochrome f) at the step of heme attachment. This chain is Cytochrome c biogenesis protein CcsA, found in Crocosphaera subtropica (strain ATCC 51142 / BH68) (Cyanothece sp. (strain ATCC 51142)).